Here is a 393-residue protein sequence, read N- to C-terminus: Protein TsgA (393 aa).

12 helical membrane-spanning segments follow: residues 11–31 (WISF…GMVM), 51–71 (FLNA…EIIP), 78–98 (FGFI…SLAL), 101–121 (AAMF…TFLI), 134–154 (LLFT…VAAF), 162–182 (WYWV…LTFG), 206–226 (IGVL…LGFI), 245–265 (ALVS…SFIL), 273–293 (ILTV…TGTQ), 298–318 (WFIL…ITLG), 332–352 (FILT…GPIV), and 361–381 (LLTA…LGFV).

The protein belongs to the major facilitator superfamily. TsgA family.

The protein localises to the cell inner membrane. The polypeptide is Protein TsgA (Salmonella agona (strain SL483)).